Consider the following 280-residue polypeptide: Urease accessory protein UreD 1 (280 aa).

This sequence belongs to the UreD family. As to quaternary structure, ureD, UreF and UreG form a complex that acts as a GTP-hydrolysis-dependent molecular chaperone, activating the urease apoprotein by helping to assemble the nickel containing metallocenter of UreC. The UreE protein probably delivers the nickel.

It localises to the cytoplasm. Its function is as follows. Required for maturation of urease via the functional incorporation of the urease nickel metallocenter. The polypeptide is Urease accessory protein UreD 1 (Brucella canis (strain ATCC 23365 / NCTC 10854 / RM-666)).